The following is a 147-amino-acid chain: 3-dehydroquinate dehydratase (147 aa).

Catalysis depends on tyrosine 24, which acts as the Proton acceptor. Substrate-binding residues include asparagine 75, histidine 81, and aspartate 88. The Proton donor role is filled by histidine 101. Substrate-binding positions include 102–103 (IS) and arginine 112.

Belongs to the type-II 3-dehydroquinase family. In terms of assembly, homododecamer.

It catalyses the reaction 3-dehydroquinate = 3-dehydroshikimate + H2O. It functions in the pathway metabolic intermediate biosynthesis; chorismate biosynthesis; chorismate from D-erythrose 4-phosphate and phosphoenolpyruvate: step 3/7. Its function is as follows. Catalyzes a trans-dehydration via an enolate intermediate. In Cereibacter sphaeroides (strain KD131 / KCTC 12085) (Rhodobacter sphaeroides), this protein is 3-dehydroquinate dehydratase.